Here is a 1513-residue protein sequence, read N- to C-terminus: DNA-directed RNA polymerase subunit beta'' (1513 aa).

C220, C296, C303, and C306 together coordinate Zn(2+). Residues 644-769 (RTREKDSENE…EYGNPEEDSV (126 aa)) are disordered. Over residues 659 to 679 (NEYRTREEECKTLEDEYRTRE) the composition is skewed to basic and acidic residues. Acidic residues predominate over residues 680-707 (EEYETLEDEYGIPENEYETLEDEYGILE). Residues 726–737 (NKYRPREDKYGT) show a composition bias toward basic and acidic residues. Residues 738 to 767 (LEEDSEDEHGTLEEDSEEDSEDEYGNPEED) are compositionally biased toward acidic residues.

This sequence belongs to the RNA polymerase beta' chain family. RpoC2 subfamily. As to quaternary structure, in plastids the minimal PEP RNA polymerase catalytic core is composed of four subunits: alpha, beta, beta', and beta''. When a (nuclear-encoded) sigma factor is associated with the core the holoenzyme is formed, which can initiate transcription. The cofactor is Zn(2+).

It localises to the plastid. The protein resides in the chloroplast. The catalysed reaction is RNA(n) + a ribonucleoside 5'-triphosphate = RNA(n+1) + diphosphate. Its function is as follows. DNA-dependent RNA polymerase catalyzes the transcription of DNA into RNA using the four ribonucleoside triphosphates as substrates. In Oryza sativa (Rice), this protein is DNA-directed RNA polymerase subunit beta''.